The sequence spans 127 residues: Fatty acid-binding protein, liver-type (127 aa).

Belongs to the calycin superfamily. Fatty-acid binding protein (FABP) family.

The protein localises to the cytoplasm. In Epinephelus coioides (Orange-spotted grouper), this protein is Fatty acid-binding protein, liver-type (fabp1).